The sequence spans 2080 residues: Dedicator of cytokinesis protein 6 (2080 aa).

Over residues 20–31 the composition is skewed to basic and acidic residues; that stretch reads EVRKQVSRERSG. Disordered stretches follow at residues 20-44, 156-189, and 408-441; these read EVRK…SSLG, QDTP…SGAS, and PQDR…GDDA. Residues 32 to 42 are compositionally biased toward low complexity; that stretch reads SPHSSRRSSSS. Ser178 is modified (phosphoserine). Residues 408–425 are compositionally biased toward basic and acidic residues; sequence PQDRDSDSEGERRPTWAE. The C2 DOCK-type domain maps to 546–712; the sequence is RNLLFVYPHS…GVFSVELTAV (167 aa). At Arg863 the chain carries Omega-N-methylarginine. A phosphoserine mark is found at Ser870, Ser878, and Ser882. Residues 1101–1123 are disordered; that stretch reads ASPSPSVSSTTSQSSTFSSQAPD. The span at 1104-1122 shows a compositional bias: low complexity; sequence SPSVSSTTSQSSTFSSQAP. The residue at position 1341 (Ser1341) is a Phosphoserine. The DOCKER domain maps to 1620–2056; it reads RGYQGSPDLR…LQPLLTQRLP (437 aa). The residue at position 2064 (Thr2064) is a Phosphothreonine. 2 positions are modified to phosphoserine: Ser2065 and Ser2069.

Belongs to the DOCK family. Widely expressed with highest levels in lung and heart.

It is found in the cytoplasm. The protein resides in the perinuclear region. Acts as a guanine nucleotide exchange factor (GEF) for CDC42 and RAC1 small GTPases. Through its activation of CDC42 and RAC1, regulates neurite outgrowth in an vitro differentiation system. This Mus musculus (Mouse) protein is Dedicator of cytokinesis protein 6 (Dock6).